The chain runs to 136 residues: Methylglyoxal synthase (136 aa).

One can recognise an MGS-like domain in the interval 1 to 136; that stretch reads MKIALIAHDR…REVVREENEA (136 aa). Substrate-binding positions include His-8, Lys-12, 34–37, and 54–55; these read TGTT and SG. Asp-60 acts as the Proton donor/acceptor in catalysis. His-87 contacts substrate.

This sequence belongs to the methylglyoxal synthase family.

The enzyme catalyses dihydroxyacetone phosphate = methylglyoxal + phosphate. Its function is as follows. Catalyzes the formation of methylglyoxal from dihydroxyacetone phosphate. The chain is Methylglyoxal synthase from Brevibacillus brevis (strain 47 / JCM 6285 / NBRC 100599).